We begin with the raw amino-acid sequence, 555 residues long: Urocanate hydratase (555 aa).

Residues 51-52, Gln129, 175-177, Glu195, 262-266, 272-273, and Tyr321 contribute to the NAD(+) site; these read GG, GMG, QTSAH, and YL. The active site involves Cys409. Residue Gly491 participates in NAD(+) binding.

Belongs to the urocanase family. The cofactor is NAD(+).

Its subcellular location is the cytoplasm. The catalysed reaction is 4-imidazolone-5-propanoate = trans-urocanate + H2O. It functions in the pathway amino-acid degradation; L-histidine degradation into L-glutamate; N-formimidoyl-L-glutamate from L-histidine: step 2/3. Functionally, catalyzes the conversion of urocanate to 4-imidazolone-5-propionate. The sequence is that of Urocanate hydratase from Xanthomonas axonopodis pv. citri (strain 306).